The following is a 282-amino-acid chain: Ribosomal RNA small subunit methyltransferase A (282 aa).

Positions 11, 13, 44, 65, 90, and 106 each coordinate S-adenosyl-L-methionine.

The protein belongs to the class I-like SAM-binding methyltransferase superfamily. rRNA adenine N(6)-methyltransferase family. RsmA subfamily.

It localises to the cytoplasm. The enzyme catalyses adenosine(1518)/adenosine(1519) in 16S rRNA + 4 S-adenosyl-L-methionine = N(6)-dimethyladenosine(1518)/N(6)-dimethyladenosine(1519) in 16S rRNA + 4 S-adenosyl-L-homocysteine + 4 H(+). Specifically dimethylates two adjacent adenosines (A1518 and A1519) in the loop of a conserved hairpin near the 3'-end of 16S rRNA in the 30S particle. May play a critical role in biogenesis of 30S subunits. In Synechococcus sp. (strain JA-2-3B'a(2-13)) (Cyanobacteria bacterium Yellowstone B-Prime), this protein is Ribosomal RNA small subunit methyltransferase A.